A 237-amino-acid chain; its full sequence is uncharacterized protein (237 aa).

Helical transmembrane passes span 19-39, 51-71, 81-101, 106-126, 136-156, 159-179, and 209-229; these read ILNGIWLITALGLVATAGLAW, YDSPPMYVAIGLLLLCMYGLS, IAGVIYLFLLSLVAIVVASLV, IIIVFSTAGAMFLISMLAGLL, FIIMMTLTGLALVIIVNAALM, RPIWIISCLMIVLWSGIISHG, and LYYYFIGFFGILAAIAITLVW.

It localises to the cell membrane. This is an uncharacterized protein from Escherichia coli (strain K12).